The sequence spans 259 residues: UPF0246 protein Pfl01_0961 (259 aa).

The protein belongs to the UPF0246 family.

The chain is UPF0246 protein Pfl01_0961 from Pseudomonas fluorescens (strain Pf0-1).